Here is a 662-residue protein sequence, read N- to C-terminus: DNA ligase (662 aa).

NAD(+) is bound by residues Asp31–Asp35 and Ser79–Leu80. Lys121 serves as the catalytic N6-AMP-lysine intermediate. NAD(+)-binding residues include Arg143, Glu177, and Lys313. Positions 406, 409, 422, and 428 each coordinate Zn(2+). Residues Val586–Ile662 form the BRCT domain.

The protein belongs to the NAD-dependent DNA ligase family. LigA subfamily. Mg(2+) is required as a cofactor. The cofactor is Mn(2+).

The catalysed reaction is NAD(+) + (deoxyribonucleotide)n-3'-hydroxyl + 5'-phospho-(deoxyribonucleotide)m = (deoxyribonucleotide)n+m + AMP + beta-nicotinamide D-nucleotide.. Functionally, DNA ligase that catalyzes the formation of phosphodiester linkages between 5'-phosphoryl and 3'-hydroxyl groups in double-stranded DNA using NAD as a coenzyme and as the energy source for the reaction. It is essential for DNA replication and repair of damaged DNA. The polypeptide is DNA ligase (Clostridium perfringens (strain SM101 / Type A)).